Reading from the N-terminus, the 163-residue chain is 3-isopropylmalate dehydratase small subunit (163 aa).

Belongs to the LeuD family. LeuD type 2 subfamily. Heterodimer of LeuC and LeuD.

The catalysed reaction is (2R,3S)-3-isopropylmalate = (2S)-2-isopropylmalate. Its pathway is amino-acid biosynthesis; L-leucine biosynthesis; L-leucine from 3-methyl-2-oxobutanoate: step 2/4. Its function is as follows. Catalyzes the isomerization between 2-isopropylmalate and 3-isopropylmalate, via the formation of 2-isopropylmaleate. This Brachyspira hyodysenteriae (strain ATCC 49526 / WA1) protein is 3-isopropylmalate dehydratase small subunit.